The chain runs to 275 residues: Myoblast determination protein 1 homolog (275 aa).

Residues 84-135 form the bHLH domain; that stretch reads DRRKAATMRERRRLSKVNDAFETLKRCTSTNPNQRLPKVEILRNAISYIESL. Positions 234–275 are disordered; sequence EGHEESPCSPHEGSVLSDTGTTAPSPTSCPQQQAQETIYQVL. Polar residues predominate over residues 249-275; it reads LSDTGTTAPSPTSCPQQQAQETIYQVL.

In terms of assembly, efficient DNA binding requires dimerization with another bHLH protein. As to expression, from mid-gastrula to just before somite formation, expressed in cells adjacent to axial mesoderm. Subsequently, during the anterior-to-posterior wave of somite formation and maturation, expressed within particular regions of each somite. Expressed in both muscle and non-muscle cells.

Its subcellular location is the nucleus. Its function is as follows. May act as a transcriptional activator that promotes transcription of muscle-specific target genes and plays a role in muscle differentiation. The chain is Myoblast determination protein 1 homolog (myod1) from Danio rerio (Zebrafish).